The chain runs to 165 residues: Putative pre-16S rRNA nuclease (165 aa).

This sequence belongs to the YqgF nuclease family.

It localises to the cytoplasm. Its function is as follows. Could be a nuclease involved in processing of the 5'-end of pre-16S rRNA. The chain is Putative pre-16S rRNA nuclease from Rhizobium meliloti (strain 1021) (Ensifer meliloti).